A 269-amino-acid polypeptide reads, in one-letter code: Ribonuclease HII (269 aa).

Positions 79-269 (TYLAGADEVG…SFLKNILNTF (191 aa)) constitute an RNase H type-2 domain. 3 residues coordinate a divalent metal cation: Asp-85, Glu-86, and Asp-182.

It belongs to the RNase HII family. The cofactor is Mn(2+). It depends on Mg(2+) as a cofactor.

The protein localises to the cytoplasm. It catalyses the reaction Endonucleolytic cleavage to 5'-phosphomonoester.. Endonuclease that specifically degrades the RNA of RNA-DNA hybrids. The protein is Ribonuclease HII of Clostridium novyi (strain NT).